The primary structure comprises 328 residues: DNA-directed RNA polymerase subunit alpha (328 aa).

Positions 1 to 244 are alpha N-terminal domain (alpha-NTD); the sequence is MEKFLKYEIK…EHLNPIVSVN (244 aa). The segment at 261–328 is alpha C-terminal domain (alpha-CTD); the sequence is KVKSFAKQIE…VQELGLKFRS (68 aa).

Belongs to the RNA polymerase alpha chain family. As to quaternary structure, homodimer. The RNAP catalytic core consists of 2 alpha, 1 beta, 1 beta' and 1 omega subunit. When a sigma factor is associated with the core the holoenzyme is formed, which can initiate transcription.

The enzyme catalyses RNA(n) + a ribonucleoside 5'-triphosphate = RNA(n+1) + diphosphate. DNA-dependent RNA polymerase catalyzes the transcription of DNA into RNA using the four ribonucleoside triphosphates as substrates. The sequence is that of DNA-directed RNA polymerase subunit alpha from Mycoplasma genitalium (strain ATCC 33530 / DSM 19775 / NCTC 10195 / G37) (Mycoplasmoides genitalium).